We begin with the raw amino-acid sequence, 196 residues long: Peptide deformylase (196 aa).

The Fe cation site is built by cysteine 103 and histidine 145. Glutamate 146 is an active-site residue. Histidine 149 provides a ligand contact to Fe cation.

This sequence belongs to the polypeptide deformylase family. Fe(2+) serves as cofactor.

The enzyme catalyses N-terminal N-formyl-L-methionyl-[peptide] + H2O = N-terminal L-methionyl-[peptide] + formate. In terms of biological role, removes the formyl group from the N-terminal Met of newly synthesized proteins. Requires at least a dipeptide for an efficient rate of reaction. N-terminal L-methionine is a prerequisite for activity but the enzyme has broad specificity at other positions. In Rhodococcus opacus (strain B4), this protein is Peptide deformylase.